The chain runs to 461 residues: Ribulose bisphosphate carboxylase (461 aa).

Asparagine 112 lines the substrate pocket. Lysine 167 functions as the Proton acceptor in the catalytic mechanism. Lysine 169 provides a ligand contact to substrate. Mg(2+)-binding residues include lysine 192, aspartate 194, and glutamate 195. Lysine 192 is subject to N6-carboxylysine. The Proton acceptor role is filled by histidine 288. Substrate-binding residues include arginine 289, histidine 322, and serine 369.

The protein belongs to the RuBisCO large chain family. Type II subfamily. As to quaternary structure, homodimer. It depends on Mg(2+) as a cofactor.

The enzyme catalyses 2 (2R)-3-phosphoglycerate + 2 H(+) = D-ribulose 1,5-bisphosphate + CO2 + H2O. It catalyses the reaction D-ribulose 1,5-bisphosphate + O2 = 2-phosphoglycolate + (2R)-3-phosphoglycerate + 2 H(+). Functionally, ruBisCO catalyzes two reactions: the carboxylation of D-ribulose 1,5-bisphosphate, the primary event in carbon dioxide fixation, as well as the oxidative fragmentation of the pentose substrate. Both reactions occur simultaneously and in competition at the same active site. The protein is Ribulose bisphosphate carboxylase of Rhodopseudomonas palustris (strain ATCC BAA-98 / CGA009).